A 209-amino-acid polypeptide reads, in one-letter code: Ribosomal RNA large subunit methyltransferase E (209 aa).

Glycine 63, tryptophan 65, aspartate 83, aspartate 99, and aspartate 124 together coordinate S-adenosyl-L-methionine. The active-site Proton acceptor is the lysine 164.

It belongs to the class I-like SAM-binding methyltransferase superfamily. RNA methyltransferase RlmE family.

It localises to the cytoplasm. It catalyses the reaction uridine(2552) in 23S rRNA + S-adenosyl-L-methionine = 2'-O-methyluridine(2552) in 23S rRNA + S-adenosyl-L-homocysteine + H(+). Functionally, specifically methylates the uridine in position 2552 of 23S rRNA at the 2'-O position of the ribose in the fully assembled 50S ribosomal subunit. This Shewanella pealeana (strain ATCC 700345 / ANG-SQ1) protein is Ribosomal RNA large subunit methyltransferase E.